The primary structure comprises 136 residues: Probable acyltransferase SID5 (136 aa).

The protein operates within siderophore biosynthesis. Probable acyltransferase; part of the gene cluster that mediates the biosynthesis of hydroxamate-containing siderophores that play a critical role in virulence via intracellular iron acquisition during macrophage infection. The protein is Probable acyltransferase SID5 of Ajellomyces capsulatus (Darling's disease fungus).